A 231-amino-acid polypeptide reads, in one-letter code: 7-cyano-7-deazaguanine synthase (231 aa).

8–18 contributes to the ATP binding site; it reads FSGGQDSTTCL. Zn(2+) contacts are provided by cysteine 188, cysteine 197, cysteine 200, and cysteine 203.

This sequence belongs to the QueC family. Requires Zn(2+) as cofactor.

The catalysed reaction is 7-carboxy-7-deazaguanine + NH4(+) + ATP = 7-cyano-7-deazaguanine + ADP + phosphate + H2O + H(+). Its pathway is purine metabolism; 7-cyano-7-deazaguanine biosynthesis. Its function is as follows. Catalyzes the ATP-dependent conversion of 7-carboxy-7-deazaguanine (CDG) to 7-cyano-7-deazaguanine (preQ(0)). The polypeptide is 7-cyano-7-deazaguanine synthase (Escherichia fergusonii (strain ATCC 35469 / DSM 13698 / CCUG 18766 / IAM 14443 / JCM 21226 / LMG 7866 / NBRC 102419 / NCTC 12128 / CDC 0568-73)).